The following is an 87-amino-acid chain: Serine rich endogenous peptide 17 (87 aa).

The first 28 residues, 1–28 (MTGKAPFFVILIAALLLLSSFFFGEVKA), serve as a signal peptide directing secretion. The interval 32–87 (KQPKHRKLGNREGDENRSNEIVVQMKARVKRSKSKRGPQKKEPYKKPPCSPPTHPA) is disordered. A compositionally biased stretch (basic and acidic residues) spans 40–49 (GNREGDENRS). The SCOOP motif signature appears at 51-71 (EIVVQMKARVKRSKSKRGPQK). Basic residues predominate over residues 58–69 (ARVKRSKSKRGP). Residues 63–65 (SKS) carry the SxS motif essential for MIK2 binding motif. Residues 77-87 (KPPCSPPTHPA) are compositionally biased toward pro residues.

It belongs to the serine rich endogenous peptide (SCOOP) phytocytokine family. In terms of assembly, interacts with MIK2 (via extracellular leucine-rich repeat domain); this interaction triggers the formation of complex between MIK2 and the BAK1/SERK3 and SERK4 coreceptors, and subsequent BAK1 activation by phosphorylation.

It localises to the cell membrane. The protein localises to the secreted. The protein resides in the extracellular space. It is found in the apoplast. Functionally, brassicaceae-specific phytocytokine (plant endogenous peptide released into the apoplast) perceived by MIK2 in a BAK1/SERK3 and SERK4 coreceptors-dependent manner, that modulates various physiological and antimicrobial processes including growth prevention and reactive oxygen species (ROS) response regulation. The sequence is that of Serine rich endogenous peptide 17 from Arabidopsis thaliana (Mouse-ear cress).